The following is a 460-amino-acid chain: Fumarate hydratase class II (460 aa).

Residues 95–97 (SGT), 126–129 (HPND), 136–138 (SSN), and threonine 184 each bind substrate. Histidine 185 functions as the Proton donor/acceptor in the catalytic mechanism. Serine 315 is an active-site residue. Substrate contacts are provided by residues serine 316 and 321–323 (KIN).

It belongs to the class-II fumarase/aspartase family. Fumarase subfamily. As to quaternary structure, homotetramer.

It is found in the cytoplasm. It catalyses the reaction (S)-malate = fumarate + H2O. The protein operates within carbohydrate metabolism; tricarboxylic acid cycle; (S)-malate from fumarate: step 1/1. Functionally, involved in the TCA cycle. Catalyzes the stereospecific interconversion of fumarate to L-malate. The protein is Fumarate hydratase class II of Chlamydia caviae (strain ATCC VR-813 / DSM 19441 / 03DC25 / GPIC) (Chlamydophila caviae).